We begin with the raw amino-acid sequence, 201 residues long: MRKINDYYAKKAKKDNYPARSIYKLEEAQKKYDIISRGDSILDLGCFPGSWSIYASELAGPKGIVVGVDLQQAVGGGRADAAPIHWICEDIREPAMLEAVRRIRPSFRVLISDMAPKTTGNRWTDAQQSLNLCYQTLEIAEQVLLNKGNYICKVFQGGDFPDFVDAVKKRFESARVIKPQSSRIESREVFVLGLNYRKPQK.

Residues Gly49, Trp51, Asp69, Asp90, and Asp113 each contribute to the S-adenosyl-L-methionine site. The Proton acceptor role is filled by Lys153.

Belongs to the class I-like SAM-binding methyltransferase superfamily. RNA methyltransferase RlmE family.

It is found in the cytoplasm. The catalysed reaction is uridine(2552) in 23S rRNA + S-adenosyl-L-methionine = 2'-O-methyluridine(2552) in 23S rRNA + S-adenosyl-L-homocysteine + H(+). In terms of biological role, specifically methylates the uridine in position 2552 of 23S rRNA at the 2'-O position of the ribose in the fully assembled 50S ribosomal subunit. In Desulfotalea psychrophila (strain LSv54 / DSM 12343), this protein is Ribosomal RNA large subunit methyltransferase E.